The following is a 246-amino-acid chain: Probable transcriptional regulatory protein CTC_02215 (246 aa).

The protein belongs to the TACO1 family.

Its subcellular location is the cytoplasm. The chain is Probable transcriptional regulatory protein CTC_02215 from Clostridium tetani (strain Massachusetts / E88).